The sequence spans 204 residues: Adenylyl-sulfate kinase (204 aa).

Residue 34 to 41 participates in ATP binding; sequence GLSGSGKS. Ser108 functions as the Phosphoserine intermediate in the catalytic mechanism.

This sequence belongs to the APS kinase family.

The catalysed reaction is adenosine 5'-phosphosulfate + ATP = 3'-phosphoadenylyl sulfate + ADP + H(+). It participates in sulfur metabolism; hydrogen sulfide biosynthesis; sulfite from sulfate: step 2/3. Functionally, catalyzes the synthesis of activated sulfate. The chain is Adenylyl-sulfate kinase from Phocaeicola vulgatus (strain ATCC 8482 / DSM 1447 / JCM 5826 / CCUG 4940 / NBRC 14291 / NCTC 11154) (Bacteroides vulgatus).